A 189-amino-acid polypeptide reads, in one-letter code: Dihydrofolate reductase (189 aa).

A DHFR domain is found at Ser-3–Lys-184. NADP(+) is bound by residues Ala-9 and Gly-15 to Asn-21. Glu-30–Gln-35 is a binding site for substrate. Lys-54 to Thr-56 is an NADP(+) binding site. The substrate site is built by Asn-64 and Arg-70. NADP(+) is bound by residues Ser-76–Glu-78 and Gly-116–Ala-123.

The protein belongs to the dihydrofolate reductase family.

The enzyme catalyses (6S)-5,6,7,8-tetrahydrofolate + NADP(+) = 7,8-dihydrofolate + NADPH + H(+). The protein operates within cofactor biosynthesis; tetrahydrofolate biosynthesis; 5,6,7,8-tetrahydrofolate from 7,8-dihydrofolate: step 1/1. Key enzyme in folate metabolism. Contributes to the de novo mitochondrial thymidylate biosynthesis pathway. Catalyzes an essential reaction for de novo glycine and purine synthesis, and for DNA precursor synthesis. May bind to mRNA. The protein is Dihydrofolate reductase (DHFR) of Gallus gallus (Chicken).